The sequence spans 1014 residues: Resistance to glucose repression protein 1 (1014 aa).

Residues 1–63 (MSTNLANYFA…AVQAKNDDDF (63 aa)) are disordered. Ser2 carries the N-acetylserine modification. The segment covering 11 to 34 (GKKDIENEHVNRNASHESNSKSDV) has biased composition (basic and acidic residues). Thr73 carries the post-translational modification Phosphothreonine. Ser75 bears the Phosphoserine mark. Disordered regions lie at residues 90–144 (LGRS…YLIP) and 236–270 (SEGN…KNSK). Residues 104–115 (YDNSSNNSSSNS) show a composition bias toward low complexity. Ser242 and Ser254 each carry phosphoserine. Positions 247-260 (DLERGYGSDDENSK) are enriched in basic and acidic residues. A Nuclear localization signal motif is present at residues 277-283 (KPILKKR). Ser311 bears the Phosphoserine mark. The interval 340–463 (YPKESNSSVS…SEKSNKPTKN (124 aa)) is disordered. Composition is skewed to polar residues over residues 343–352 (ESNSSVSLKS), 361–370 (STIPNPVGEN), 389–407 (HVQN…LENS), and 415–455 (LDQN…NPSE). Residue Ser421 is modified to Phosphoserine. Phosphotyrosine is present on Tyr480. Phosphoserine is present on Ser490. Disordered regions lie at residues 531-557 (EHLN…DEEH) and 570-591 (SDSG…TTSR). A phosphoserine mark is found at Ser570, Ser572, and Ser576. Polar residues predominate over residues 578 to 591 (ITDNSSVASSTTSR). Positions 595–599 (RPIIK) match the Nuclear localization signal motif. Residues Ser610, Ser614, and Ser680 each carry the phosphoserine modification. Positions 690–897 (SKEKHVPQLH…QSFRIVNNTP (208 aa)) are disordered. A compositionally biased stretch (low complexity) spans 722–740 (YSSSSDSEQQFIEDSQYNS). The segment covering 741-758 (SDDEEEEDDDDQEVDDNH) has biased composition (acidic residues). Composition is skewed to polar residues over residues 770–802 (LGKS…NFTG) and 822–833 (RNSSSGNFIFNS). Positions 873-879 (KKKALPK) match the Nuclear localization signal motif. The segment covering 884–897 (SDSSQSFRIVNNTP) has biased composition (polar residues). Residue Thr896 is modified to Phosphothreonine. At Ser898 the chain carries Phosphoserine. Residues 959-972 (KKVDSVQTTRKEAS) show a composition bias toward basic and acidic residues. The interval 959–982 (KKVDSVQTTRKEASLTDSSNESLH) is disordered. Residue Ser980 is modified to Phosphoserine.

As to quaternary structure, interacts with SAK1.

The protein resides in the nucleus. Involved in RNA processing and negative regulation of glucose repression. Regulates the level of two antigens, P43 and P70. Binds to protein phosphatase type 1. Functions with REG2 and SNF1 protein kinase to regulate growth. Might regulate SNF1 directly or indirectly. The sequence is that of Resistance to glucose repression protein 1 (REG1) from Saccharomyces cerevisiae (strain ATCC 204508 / S288c) (Baker's yeast).